The sequence spans 57 residues: Small ribosomal subunit protein bS21 (57 aa).

The tract at residues R35–F57 is disordered. Positions V43–F57 are enriched in basic residues.

This sequence belongs to the bacterial ribosomal protein bS21 family.

This chain is Small ribosomal subunit protein bS21, found in Alkaliphilus metalliredigens (strain QYMF).